The primary structure comprises 416 residues: uncharacterized protein (416 aa).

The Zn(2+) site is built by His-29, Asp-31, Glu-144, His-215, and His-236.

The protein belongs to the metallo-dependent hydrolases superfamily. Peptidase M19 family. Requires Zn(2+) as cofactor.

It catalyses the reaction an L-aminoacyl-L-amino acid + H2O = 2 an L-alpha-amino acid. This is an uncharacterized protein from Schizosaccharomyces pombe (strain 972 / ATCC 24843) (Fission yeast).